The primary structure comprises 3072 residues: Eukaryotic translation initiation factor 2-alpha kinase PK4 (3072 aa).

At methionine 1–glutamate 106 the chain is on the cytoplasmic side. Residues isoleucine 107 to leucine 127 traverse the membrane as a helical segment. Over leucine 128–arginine 1643 the chain is Lumenal. The tract at residues lysine 383–glutamate 402 is disordered. The 10 X 7 AA tandem repeat of D-K-N-[GE]-L-D-[GD] stretch occupies residues lysine 576 to aspartate 610. The interval glutamine 970–serine 1010 is disordered. Over residues aspartate 978–lysine 996 the composition is skewed to basic and acidic residues. A compositionally biased stretch (low complexity) spans asparagine 997–asparagine 1009. A helical membrane pass occupies residues tryptophan 1644–tyrosine 1664. The Cytoplasmic portion of the chain corresponds to arginine 1665–lysine 3072. 2 disordered regions span residues lysine 1737–asparagine 1766 and lysine 1917–lysine 1937. Positions asparagine 1738–asparagine 1766 are enriched in low complexity. The span at asparagine 1928–lysine 1937 shows a compositional bias: basic and acidic residues. ATP-binding positions include isoleucine 2152–valine 2160 and lysine 2177. Disordered stretches follow at residues phenylalanine 2316 to aspartate 2402, arginine 2479 to aspartate 2558, and glutamate 2691 to isoleucine 2749. Basic and acidic residues predominate over residues lysine 2326 to histidine 2335. Positions histidine 2362–isoleucine 2384 are enriched in basic residues. Tandem repeats lie at residues aspartate 2483–glycine 2489, aspartate 2490–glycine 2496, aspartate 2497–glycine 2503, aspartate 2504–glycine 2510, aspartate 2511–glycine 2517, aspartate 2518–glycine 2524, aspartate 2525–glycine 2531, aspartate 2532–glycine 2538, aspartate 2539–glycine 2545, and aspartate 2546–aspartate 2552. Positions threonine 2627–leucine 2998 constitute a Protein kinase domain. The segment covering asparagine 2692–asparagine 2702 has biased composition (acidic residues). Aspartate 2835 acts as the Proton acceptor in catalysis. Position 2902 is a phosphothreonine (threonine 2902).

This sequence belongs to the protein kinase superfamily. Ser/Thr protein kinase family. GCN2 subfamily. As to quaternary structure, may form oligomers in response to stress; oligomerization may result in catalytic activity. Interacts with BIP; the interaction is disrupted in response to stress. Auto-phosphorylated.

It localises to the endoplasmic reticulum membrane. The enzyme catalyses L-seryl-[protein] + ATP = O-phospho-L-seryl-[protein] + ADP + H(+). It carries out the reaction L-threonyl-[protein] + ATP = O-phospho-L-threonyl-[protein] + ADP + H(+). Its activity is regulated as follows. Dissociation from BIP and oligomerization, may results autophosphorylation and kinase activity induction. Functionally, during the asexual blood stage, phosphorylates translation factor eIF2alpha in late schizonts resulting in protein translation inhibition. Plays a role in trophozoite differentiation into schizonts. The protein is Eukaryotic translation initiation factor 2-alpha kinase PK4 of Plasmodium falciparum (isolate 3D7).